The primary structure comprises 726 residues: NHL repeat-containing protein 2 (726 aa).

The region spanning 43 to 200 (QKVDGWEQDL…TSIALKYYKD (158 aa)) is the Thioredoxin domain. 6 NHL repeats span residues 212–254 (KLYK…VWKN), 265–307 (NPGR…IDLE), 335–369 (ISSPWDVVFGTSGSEVQRGDILWIAMAGTHQIWAL), 409–439 (FAQPSGLSLASEDPWSCLFVADSESSTVRTV), 461–505 (AFGD…VDPK), and 518–562 (TNNV…MDLE).

Monomer. As to expression, ubiquitous. Detected in heart, kidney, muscle, brain, lung, liver and in skin fibroblasts (at protein level).

It localises to the cytoplasm. Its subcellular location is the cytosol. Required for normal embryonic development. In Homo sapiens (Human), this protein is NHL repeat-containing protein 2 (NHLRC2).